Consider the following 272-residue polypeptide: Sulfate transporter CysZ (272 aa).

The next 4 membrane-spanning stretches (helical) occupy residues 29-49, 66-86, 148-168, and 219-239; these read FVIM…WLFI, WLSF…LLLF, IIAL…VPVL, and FVPV…TLMW.

This sequence belongs to the CysZ family.

Its subcellular location is the cell inner membrane. Functionally, high affinity, high specificity proton-dependent sulfate transporter, which mediates sulfate uptake. Provides the sulfur source for the cysteine synthesis pathway. This Haemophilus influenzae (strain ATCC 51907 / DSM 11121 / KW20 / Rd) protein is Sulfate transporter CysZ.